The chain runs to 160 residues: Ribosomal RNA large subunit methyltransferase H (160 aa).

S-adenosyl-L-methionine is bound by residues Leu-76, Gly-108, and 127-132; that span reads LGKMTW.

This sequence belongs to the RNA methyltransferase RlmH family. Homodimer.

The protein localises to the cytoplasm. The catalysed reaction is pseudouridine(1915) in 23S rRNA + S-adenosyl-L-methionine = N(3)-methylpseudouridine(1915) in 23S rRNA + S-adenosyl-L-homocysteine + H(+). Functionally, specifically methylates the pseudouridine at position 1915 (m3Psi1915) in 23S rRNA. This chain is Ribosomal RNA large subunit methyltransferase H, found in Rhizobium rhizogenes (strain K84 / ATCC BAA-868) (Agrobacterium radiobacter).